The primary structure comprises 188 residues: ATP synthase subunit b (188 aa).

The chain crosses the membrane as a helical span at residues 19–39 (VYVLGATIVSFLILFLFITYF).

Belongs to the ATPase B chain family. F-type ATPases have 2 components, F(1) - the catalytic core - and F(0) - the membrane proton channel. F(1) has five subunits: alpha(3), beta(3), gamma(1), delta(1), epsilon(1). F(0) has three main subunits: a(1), b(2) and c(10-14). The alpha and beta chains form an alternating ring which encloses part of the gamma chain. F(1) is attached to F(0) by a central stalk formed by the gamma and epsilon chains, while a peripheral stalk is formed by the delta and b chains.

Its subcellular location is the cell membrane. Its function is as follows. F(1)F(0) ATP synthase produces ATP from ADP in the presence of a proton or sodium gradient. F-type ATPases consist of two structural domains, F(1) containing the extramembraneous catalytic core and F(0) containing the membrane proton channel, linked together by a central stalk and a peripheral stalk. During catalysis, ATP synthesis in the catalytic domain of F(1) is coupled via a rotary mechanism of the central stalk subunits to proton translocation. Component of the F(0) channel, it forms part of the peripheral stalk, linking F(1) to F(0). The chain is ATP synthase subunit b from Mesomycoplasma hyopneumoniae (strain J / ATCC 25934 / NCTC 10110) (Mycoplasma hyopneumoniae).